Reading from the N-terminus, the 232-residue chain is Large ribosomal subunit protein uL1 (232 aa).

It belongs to the universal ribosomal protein uL1 family. Part of the 50S ribosomal subunit.

Functionally, binds directly to 23S rRNA. The L1 stalk is quite mobile in the ribosome, and is involved in E site tRNA release. In terms of biological role, protein L1 is also a translational repressor protein, it controls the translation of the L11 operon by binding to its mRNA. This is Large ribosomal subunit protein uL1 from Paraburkholderia phymatum (strain DSM 17167 / CIP 108236 / LMG 21445 / STM815) (Burkholderia phymatum).